We begin with the raw amino-acid sequence, 374 residues long: Aminomethyltransferase (374 aa).

Belongs to the GcvT family. In terms of assembly, the glycine cleavage system is composed of four proteins: P, T, L and H.

The catalysed reaction is N(6)-[(R)-S(8)-aminomethyldihydrolipoyl]-L-lysyl-[protein] + (6S)-5,6,7,8-tetrahydrofolate = N(6)-[(R)-dihydrolipoyl]-L-lysyl-[protein] + (6R)-5,10-methylene-5,6,7,8-tetrahydrofolate + NH4(+). Functionally, the glycine cleavage system catalyzes the degradation of glycine. This chain is Aminomethyltransferase, found in Prochlorococcus marinus (strain MIT 9303).